Consider the following 349-residue polypeptide: Anthranilate phosphoribosyltransferase (349 aa).

5-phospho-alpha-D-ribose 1-diphosphate contacts are provided by residues Gly82, 85–86, 92–95, 110–118, and Ser122; these read GD, NVSS, and KHGNRAVSG. Position 82 (Gly82) interacts with anthranilate. Position 94 (Ser94) interacts with Mg(2+). Residue Asn113 coordinates anthranilate. Arg168 serves as a coordination point for anthranilate. Mg(2+)-binding residues include Asp227 and Glu228.

The protein belongs to the anthranilate phosphoribosyltransferase family. As to quaternary structure, homodimer. It depends on Mg(2+) as a cofactor.

It carries out the reaction N-(5-phospho-beta-D-ribosyl)anthranilate + diphosphate = 5-phospho-alpha-D-ribose 1-diphosphate + anthranilate. The protein operates within amino-acid biosynthesis; L-tryptophan biosynthesis; L-tryptophan from chorismate: step 2/5. Catalyzes the transfer of the phosphoribosyl group of 5-phosphorylribose-1-pyrophosphate (PRPP) to anthranilate to yield N-(5'-phosphoribosyl)-anthranilate (PRA). The protein is Anthranilate phosphoribosyltransferase of Pseudomonas aeruginosa (strain LESB58).